The following is a 150-amino-acid chain: Large ribosomal subunit protein uL11 (150 aa).

It belongs to the universal ribosomal protein uL11 family. As to quaternary structure, part of the ribosomal stalk of the 50S ribosomal subunit. Interacts with L10 and the large rRNA to form the base of the stalk. L10 forms an elongated spine to which L12 dimers bind in a sequential fashion forming a multimeric L10(L12)X complex. In terms of processing, one or more lysine residues are methylated.

Its function is as follows. Forms part of the ribosomal stalk which helps the ribosome interact with GTP-bound translation factors. The polypeptide is Large ribosomal subunit protein uL11 (Ureaplasma urealyticum serovar 10 (strain ATCC 33699 / Western)).